The sequence spans 20 residues: D-alpha-glycerophosphatase (20 aa).

As to quaternary structure, monomer. Mg(2+) serves as cofactor. It depends on Mn(2+) as a cofactor.

Its subcellular location is the cytoplasm. It functions in the pathway polyol metabolism; glycerol biosynthesis. This is D-alpha-glycerophosphatase from Bacillus licheniformis.